We begin with the raw amino-acid sequence, 364 residues long: MEVNNRVVVGMSGGVDSSVTAYLLKEQGFEVIGVTMRVWVDPYGKARDDDKSCCSLKAIHDAKKVAEILGIPHYTVNLSEVFYDKIVKYFIDEYLKGRTPNPCVFCNRFIKFGDLLEKAHELGAYYIATGHYVRKEYDEDRKRYLLKKGLDFKKDQSYMLYRLTQEQLKHALFPLGNYTKEEVRALAEKIGLPVADKRESQEICFIPDNDYKAFIKRQIKKDVKPGEFRDIHGNFLGYHKGIINYTIGQRKGLGLSSDRPLYVVDIDPENNVVIVGHQEDVWGEELISSNNNFISIEKLEEEIKVTAKIRYTAKEDEAIIKPYGDDKVLVRFLRPQRAITPGQSVVFYDGDVVVGGGIIEKKVR.

Residues 10 to 17 and M36 each bind ATP; that span reads GMSGGVDS. Catalysis depends on C106, which acts as the Nucleophile. A disulfide bond links C106 and C204. G130 contacts ATP. Positions 154-156 are interaction with tRNA; that stretch reads KDQ. C204 serves as the catalytic Cysteine persulfide intermediate. Positions 310–311 are interaction with tRNA; sequence RY.

Belongs to the MnmA/TRMU family.

The protein resides in the cytoplasm. The enzyme catalyses S-sulfanyl-L-cysteinyl-[protein] + uridine(34) in tRNA + AH2 + ATP = 2-thiouridine(34) in tRNA + L-cysteinyl-[protein] + A + AMP + diphosphate + H(+). In terms of biological role, catalyzes the 2-thiolation of uridine at the wobble position (U34) of tRNA, leading to the formation of s(2)U34. The polypeptide is tRNA-specific 2-thiouridylase MnmA 1 (Caldanaerobacter subterraneus subsp. tengcongensis (strain DSM 15242 / JCM 11007 / NBRC 100824 / MB4) (Thermoanaerobacter tengcongensis)).